A 478-amino-acid polypeptide reads, in one-letter code: Sugar transporter ERD6-like 15 (478 aa).

12 helical membrane-spanning segments follow: residues 31–51, 67–87, 106–126, 129–149, 161–181, 185–205, 267–287, 305–325, 333–353, 366–386, 406–426, and 432–452; these read FVLA…IIGY, IADY…GALI, ILFV…LLDL, LLQG…ITEI, FAQL…TIVA, LAIL…FIPE, AFSL…GLNG, FGFI…TVLV, LLLV…ISFF, VLAL…MGSI, MCNL…SYLL, and GTFL…AKLV.

It belongs to the major facilitator superfamily. Sugar transporter (TC 2.A.1.1) family.

Its subcellular location is the membrane. In terms of biological role, sugar transporter. The chain is Sugar transporter ERD6-like 15 from Arabidopsis thaliana (Mouse-ear cress).